Reading from the N-terminus, the 359-residue chain is Holliday junction branch migration complex subunit RuvB (359 aa).

Positions 1 to 22 are disordered; the sequence is MAIVSSNAEPSKGAPRPKPSRV. The tract at residues 13–204 is large ATPase domain (RuvB-L); the sequence is GAPRPKPSRV…FGLIQRLEFY (192 aa). ATP contacts are provided by L43, R44, G85, K88, T89, T90, R194, Y204, and R241. T89 contacts Mg(2+). The interval 205–276 is small ATPAse domain (RuvB-S); the sequence is GQEDLQAIVM…LVDEALTLHR (72 aa). The tract at residues 279-359 is head domain (RuvB-H); the sequence is GKGLDASDRR…GWPADEGDAA (81 aa). Positions 334 and 339 each coordinate DNA.

It belongs to the RuvB family. In terms of assembly, homohexamer. Forms an RuvA(8)-RuvB(12)-Holliday junction (HJ) complex. HJ DNA is sandwiched between 2 RuvA tetramers; dsDNA enters through RuvA and exits via RuvB. An RuvB hexamer assembles on each DNA strand where it exits the tetramer. Each RuvB hexamer is contacted by two RuvA subunits (via domain III) on 2 adjacent RuvB subunits; this complex drives branch migration. In the full resolvosome a probable DNA-RuvA(4)-RuvB(12)-RuvC(2) complex forms which resolves the HJ.

Its subcellular location is the cytoplasm. It catalyses the reaction ATP + H2O = ADP + phosphate + H(+). In terms of biological role, the RuvA-RuvB-RuvC complex processes Holliday junction (HJ) DNA during genetic recombination and DNA repair, while the RuvA-RuvB complex plays an important role in the rescue of blocked DNA replication forks via replication fork reversal (RFR). RuvA specifically binds to HJ cruciform DNA, conferring on it an open structure. The RuvB hexamer acts as an ATP-dependent pump, pulling dsDNA into and through the RuvAB complex. RuvB forms 2 homohexamers on either side of HJ DNA bound by 1 or 2 RuvA tetramers; 4 subunits per hexamer contact DNA at a time. Coordinated motions by a converter formed by DNA-disengaged RuvB subunits stimulates ATP hydrolysis and nucleotide exchange. Immobilization of the converter enables RuvB to convert the ATP-contained energy into a lever motion, pulling 2 nucleotides of DNA out of the RuvA tetramer per ATP hydrolyzed, thus driving DNA branch migration. The RuvB motors rotate together with the DNA substrate, which together with the progressing nucleotide cycle form the mechanistic basis for DNA recombination by continuous HJ branch migration. Branch migration allows RuvC to scan DNA until it finds its consensus sequence, where it cleaves and resolves cruciform DNA. The chain is Holliday junction branch migration complex subunit RuvB from Synechococcus sp. (strain CC9311).